Here is a 492-residue protein sequence, read N- to C-terminus: Aerolysin (492 aa).

The signal sequence occupies residues 1-21 (MKALKITGLSLIISATLAAQT). Intrachain disulfides connect Cys-42-Cys-98 and Cys-182-Cys-187. Positions 68–84 (WQISGLANNWVILGPGY) are interaction with host N-linked glycan. The tract at residues 256–288 (YGLSEKVSTKNKFKWPLVGETEVSIEIAANQSW) is part of the transmembrane beta-barrel after proteolytic activation of the toxin and insertion into the host membrane. The interval 346 to 355 (RWGGNAWHTH) is interaction with glycans from host GPI-anchor. Positions 446 to 492 (GSDSKVRRTRSVDGANTGLKLDIPLDAQELAELGFENVTLSVTPARN) are excised as a propeptide.

Belongs to the aerolysin family. Homodimer in solution; homoheptamer in the host membrane. After binding to GPI-anchored proteins in target membranes and proteolytic removal of the C-terminal propeptide, the protein assembles into a heptameric pre-pore complex. A further conformation change leads to insertion into the host membrane. Post-translationally, proteolytic cleavage and subsequent release of the propeptide trigger a major conformation change, leading to the formation of a heptameric pre-pore that then inserts into the host membrane.

It is found in the secreted. The protein localises to the host cell membrane. Secreted, cytolytic toxin that forms pores in host membranes after proteolytic removal of a C-terminal propeptide, leading to destruction of the membrane permeability barrier and cell death. The pores are formed by transmembrane beta-strands and are approximately 3 nm in diameter. The protein is Aerolysin (aerA) of Aeromonas enteropelogenes (Aeromonas trota).